We begin with the raw amino-acid sequence, 469 residues long: Serine hydroxymethyltransferase, cytosolic (469 aa).

Residue K248 is modified to N6-(pyridoxal phosphate)lysine.

It belongs to the SHMT family. In terms of assembly, homotetramer. Pyridoxal 5'-phosphate serves as cofactor.

Its subcellular location is the cytoplasm. The catalysed reaction is (6R)-5,10-methylene-5,6,7,8-tetrahydrofolate + glycine + H2O = (6S)-5,6,7,8-tetrahydrofolate + L-serine. The protein operates within one-carbon metabolism; tetrahydrofolate interconversion. Functionally, interconversion of serine and glycine. This is Serine hydroxymethyltransferase, cytosolic (SHM2) from Eremothecium gossypii (strain ATCC 10895 / CBS 109.51 / FGSC 9923 / NRRL Y-1056) (Yeast).